A 465-amino-acid polypeptide reads, in one-letter code: ATP-sulfurylase 3, chloroplastic (465 aa).

The transit peptide at 1-49 (MASMSTVFPKPTSFISQPLTKSHKSDSVTTSISFPSNSKTRSLRTISVR) directs the protein to the chloroplast.

It belongs to the sulfate adenylyltransferase family. Homotetramer.

It is found in the plastid. Its subcellular location is the chloroplast stroma. The catalysed reaction is sulfate + ATP + H(+) = adenosine 5'-phosphosulfate + diphosphate. The protein operates within sulfur metabolism; hydrogen sulfide biosynthesis; sulfite from sulfate: step 1/3. The chain is ATP-sulfurylase 3, chloroplastic (APS3) from Arabidopsis thaliana (Mouse-ear cress).